Reading from the N-terminus, the 69-residue chain is Toxin CSTX-11 (69 aa).

Cystine bridges form between C6–C21, C13–C30, C20–C47, and C32–C45.

As to expression, expressed by the venom gland.

It is found in the secreted. The protein localises to the target cell membrane. Its function is as follows. Spider venom toxin that shows calcium channel blocking activity and exhibits cytolytic activity by affecting the outer leaflet curvature and/or pore formation across the membrane. It blocks L-type calcium channels (Cav1/CACNA1) in mammalian neurons at nanomolar concentrations. Furthermore, it produces a slow voltage-independent block of mid/low and high voltage-activated calcium channels in cockroach neurons. Potassium ions, histamine, M-ctenitoxin-Cs1a (AC P83619), CSTX-9 (AC P58604), and CSTX-13 (AC P83919) synergistically increase the insecticidal activity of this toxin. In vivo, it causes paralysis in blow flies and provokes death in drosophila. The chain is Toxin CSTX-11 from Cupiennius salei (American wandering spider).